Here is a 266-residue protein sequence, read N- to C-terminus: Putative carbamate hydrolase RutD (266 aa).

An AB hydrolase-1 domain is found at 14–115 (PVVVLISGLG…TVLVSVNGWL (102 aa)).

Belongs to the AB hydrolase superfamily. Hydrolase RutD family.

The enzyme catalyses carbamate + 2 H(+) = NH4(+) + CO2. In terms of biological role, involved in pyrimidine catabolism. May facilitate the hydrolysis of carbamate, a reaction that can also occur spontaneously. The polypeptide is Putative carbamate hydrolase RutD (Escherichia coli O9:H4 (strain HS)).